Reading from the N-terminus, the 250-residue chain is Adenosylcobinamide-GDP ribazoletransferase (250 aa).

Transmembrane regions (helical) follow at residues 33 to 53 (IASY…LLYI), 63 to 83 (IVMT…HIDG), 109 to 129 (LGTN…LFLT), 137 to 157 (LTAL…SMMI), 180 to 200 (FAIA…LAVF), and 203 to 223 (ILTI…LRIG).

It belongs to the CobS family. Mg(2+) serves as cofactor.

The protein resides in the cell membrane. It catalyses the reaction alpha-ribazole + adenosylcob(III)inamide-GDP = adenosylcob(III)alamin + GMP + H(+). The enzyme catalyses alpha-ribazole 5'-phosphate + adenosylcob(III)inamide-GDP = adenosylcob(III)alamin 5'-phosphate + GMP + H(+). It participates in cofactor biosynthesis; adenosylcobalamin biosynthesis; adenosylcobalamin from cob(II)yrinate a,c-diamide: step 7/7. In terms of biological role, joins adenosylcobinamide-GDP and alpha-ribazole to generate adenosylcobalamin (Ado-cobalamin). Also synthesizes adenosylcobalamin 5'-phosphate from adenosylcobinamide-GDP and alpha-ribazole 5'-phosphate. The chain is Adenosylcobinamide-GDP ribazoletransferase from Thermoanaerobacter pseudethanolicus (strain ATCC 33223 / 39E) (Clostridium thermohydrosulfuricum).